The chain runs to 711 residues: Ribosomal RNA large subunit methyltransferase K/L (711 aa).

Residues 43-154 (LAYRITLWTR…NGVITIAMNF (112 aa)) enclose the THUMP domain.

This sequence belongs to the methyltransferase superfamily. RlmKL family.

Its subcellular location is the cytoplasm. The enzyme catalyses guanosine(2445) in 23S rRNA + S-adenosyl-L-methionine = N(2)-methylguanosine(2445) in 23S rRNA + S-adenosyl-L-homocysteine + H(+). It carries out the reaction guanosine(2069) in 23S rRNA + S-adenosyl-L-methionine = N(2)-methylguanosine(2069) in 23S rRNA + S-adenosyl-L-homocysteine + H(+). Specifically methylates the guanine in position 2445 (m2G2445) and the guanine in position 2069 (m7G2069) of 23S rRNA. This is Ribosomal RNA large subunit methyltransferase K/L from Shewanella oneidensis (strain ATCC 700550 / JCM 31522 / CIP 106686 / LMG 19005 / NCIMB 14063 / MR-1).